Consider the following 416-residue polypeptide: Glutamyl-tRNA reductase (416 aa).

Substrate is bound by residues 49 to 52, Ser-105, 110 to 112, and Gln-116; these read TCNR and EPQ. Cys-50 serves as the catalytic Nucleophile. 185 to 190 contributes to the NADP(+) binding site; that stretch reads GAGETI.

The protein belongs to the glutamyl-tRNA reductase family. As to quaternary structure, homodimer.

The catalysed reaction is (S)-4-amino-5-oxopentanoate + tRNA(Glu) + NADP(+) = L-glutamyl-tRNA(Glu) + NADPH + H(+). The protein operates within porphyrin-containing compound metabolism; protoporphyrin-IX biosynthesis; 5-aminolevulinate from L-glutamyl-tRNA(Glu): step 1/2. Functionally, catalyzes the NADPH-dependent reduction of glutamyl-tRNA(Glu) to glutamate 1-semialdehyde (GSA). The sequence is that of Glutamyl-tRNA reductase from Shewanella baltica (strain OS185).